A 21-amino-acid polypeptide reads, in one-letter code: Formate ester dehydrogenase beta chain (21 aa).

In terms of assembly, heterotrimer composed of an alpha, a beta and a gamma chain.

The protein is Formate ester dehydrogenase beta chain of Amycolatopsis methanolica.